We begin with the raw amino-acid sequence, 780 residues long: MAPYCSSLRSALLVLALCALSPSHAATASRGRAQERAPQSRVSETRPSTMVVEHPEFLKAGKEPGLQIWRVEKFDLVPVPPNLYGDFFTGDAYVILKTVQLRNGNLQYDLHYWLGNECSQDESGAAAIFTVQLDDYLNGRAVQHREVQGFESSTFQGYFKSGLKYKKGGVASGFKHVVPNEVVVQRLFQVKGRRVVRATEVPVSWDSFNNGDCFILDLGNNIYQWCGSGSNKFERLKATQVSKGIRDNERSGRAQVHVSEEGSEPEAMLQVLGPKPDLPQGTEDTAKEDAANRRLAKLYKVSNSGGSMSVSLVADENPFAQSALRSEDCFILDHGRDGKIFVWKGKQANMDERKAALKTASDFISKMQYPRQTQVSVLPEGGETPLFKQFFKNWRDPDQTDGPGLSYLSSHIANVERVPFDAATLHTSTAMAAQHGMDDDGTGQKQIWRIEGSNKVLVDPATYGQFYGGDSYIILYNYRHGGRQGQIIYNWQGAQSTQDEVAASAILTAQLDEELGGTPVQSRVVQGKEPAHLMSLFGGKPMIIYKGGTSRDGGQTTPASTRLFQVRASSSGATRAVEVMPKAGALNSNDAFVLKTPSAAYLWVGTGASDAEKTGALELLKVLRAQHVQVEEGSEPDGFWEALGGKTAYRTSPRLKDKKMDAHPPRLFACSNRIGRFVIEEVPGELMQEDLATDDVMLLDTWDQVFVWVGKDSQEEEKTEALTSAKRYIETDPANRDRRTPITVVRQGFEPPSFVGWFLGWDDDYWSVDPLDRALAELAA.

A signal peptide spans 1–25 (MAPYCSSLRSALLVLALCALSPSHA). The tract at residues 28 to 48 (ASRGRAQERAPQSRVSETRPS) is disordered. Positions 51-174 (VVEHPEFLKA…YKKGGVASGF (124 aa)) are actin-severing. A Gelsolin-like 1 repeat occupies 74 to 155 (FDLVPVPPNL…EVQGFESSTF (82 aa)). Position 84 is a phosphotyrosine (tyrosine 84). Residues glycine 90, aspartate 91, glutamate 122, aspartate 134, glycine 139, and alanine 141 each coordinate Ca(2+). An actin-actin interfilament contact point region spans residues 121–124 (DESG). 160–167 (KSGLKYKK) contacts a 1,2-diacyl-sn-glycero-3-phospho-(1D-myo-inositol-4,5-bisphosphate). Residue valine 170 participates in Ca(2+) binding. 186–194 (RLFQVKGRR) is a binding site for a 1,2-diacyl-sn-glycero-3-phospho-(1D-myo-inositol-4,5-bisphosphate). One copy of the Gelsolin-like 2 repeat lies at 196–268 (VRATEVPVSW…SEEGSEPEAM (73 aa)). 2 residues coordinate Ca(2+): glycine 211 and aspartate 212. Residues cysteine 213 and cysteine 226 are joined by a disulfide bond. Ca(2+) is bound by residues glutamate 234, aspartate 284, glutamate 327, aspartate 328, and glutamate 352. The interval 244–286 (GIRDNERSGRAQVHVSEEGSEPEAMLQVLGPKPDLPQGTEDTA) is disordered. Residues 315–387 (DENPFAQSAL…LPEGGETPLF (73 aa)) form a Gelsolin-like 3 repeat. Residues tyrosine 407 and tyrosine 463 each carry the phosphotyrosine modification. Residues 432–780 (AAQHGMDDDG…LDRALAELAA (349 aa)) form an actin-binding, Ca-sensitive region. A Gelsolin-like 4 repeat occupies 453 to 534 (SNKVLVDPAT…VQGKEPAHLM (82 aa)). 7 residues coordinate Ca(2+): glycine 469, aspartate 470, glutamate 500, aspartate 512, glycine 517, proline 519, and threonine 549. Residues 576 to 640 (AVEVMPKAGA…EEGSEPDGFW (65 aa)) form a Gelsolin-like 5 repeat. Lysine 582 is modified (N6-acetyllysine). Asparagine 589 and aspartate 590 together coordinate Ca(2+). Tyrosine 601 is modified (phosphotyrosine). Glutamate 612 is a Ca(2+) binding site. Tyrosine 649 carries the phosphotyrosine modification. The stretch at 679 to 754 (IEEVPGELMQ…VRQGFEPPSF (76 aa)) is one Gelsolin-like 6 repeat. Ca(2+) is bound by residues aspartate 694, aspartate 695, and glutamate 717. Threonine 740 is subject to Phosphothreonine.

This sequence belongs to the villin/gelsolin family. As to quaternary structure, binds to actin and to fibronectin. Identified in a complex composed of ACTA1, COBL, GSN and TMSB4X. Interacts with the inactive form of EIF2AK2/PKR. Interacts with FLII. Post-translationally, phosphorylated on tyrosine residues in vitro.

The protein localises to the secreted. The protein resides in the cytoplasm. Its subcellular location is the cytoskeleton. Functionally, calcium-regulated, actin-modulating protein that binds to the plus (or barbed) ends of actin monomers or filaments, preventing monomer exchange (end-blocking or capping). It can promote the assembly of monomers into filaments (nucleation) as well as sever filaments already formed. Plays a role in ciliogenesis. In Rattus norvegicus (Rat), this protein is Gelsolin (Gsn).